Reading from the N-terminus, the 295-residue chain is Pyridoxal 5'-phosphate synthase subunit PdxS (295 aa).

D25 contacts D-ribose 5-phosphate. K82 acts as the Schiff-base intermediate with D-ribose 5-phosphate in catalysis. G154 lines the D-ribose 5-phosphate pocket. R166 contacts D-glyceraldehyde 3-phosphate. D-ribose 5-phosphate-binding positions include G215 and 236–237 (GS).

It belongs to the PdxS/SNZ family. In terms of assembly, in the presence of PdxT, forms a dodecamer of heterodimers.

The catalysed reaction is aldehydo-D-ribose 5-phosphate + D-glyceraldehyde 3-phosphate + L-glutamine = pyridoxal 5'-phosphate + L-glutamate + phosphate + 3 H2O + H(+). It participates in cofactor biosynthesis; pyridoxal 5'-phosphate biosynthesis. Functionally, catalyzes the formation of pyridoxal 5'-phosphate from ribose 5-phosphate (RBP), glyceraldehyde 3-phosphate (G3P) and ammonia. The ammonia is provided by the PdxT subunit. Can also use ribulose 5-phosphate and dihydroxyacetone phosphate as substrates, resulting from enzyme-catalyzed isomerization of RBP and G3P, respectively. This chain is Pyridoxal 5'-phosphate synthase subunit PdxS, found in Heliobacterium modesticaldum (strain ATCC 51547 / Ice1).